Consider the following 790-residue polypeptide: GATOR2 complex protein WDR24 (790 aa).

WD repeat units lie at residues 72-112, 118-158, 161-201, 205-245, 249-291, and 295-338; these read SLNL…RNKQ, EHKR…SVST, GQSE…RCER, AHNG…AKEM, QTIA…VPAA, and EHRD…VERA. Residue S155 is modified to Phosphoserine; by AMPK. 2 positions are modified to phosphoserine: S470 and S496. T581 bears the Phosphothreonine mark. Phosphoserine occurs at positions 594 and 598. The segment at 718–740 adopts a C4-type zinc-finger fold; it reads NCSHCKRPMSSRGWVCDRCHRCA. Zn(2+) contacts are provided by C719, C722, C733, C736, C743, C746, C757, C760, H762, H765, H768, C779, C783, H785, and C787. The RING-type; atypical zinc finger occupies 741–790; sequence SMCAVCHHVVKGLFVWCQGCSHGGHLQHIMKWLEGSSHCPAGCGHLCEYS.

It belongs to the WD repeat WDR24 family. As to quaternary structure, component of the GATOR2 subcomplex, composed of MIOS, SEC13, SEH1L, WDR24 and WDR59. The GATOR2 complex interacts with CASTOR1 and CASTOR2; the interaction is negatively regulated by arginine. The GATOR2 complex interacts with SESN1, SESN2 and SESN3; the interaction is negatively regulated by amino acids. SESN1, SESN2 and SESN3 convey leucine availability via direct interaction with SEH1L and WDR24. In terms of processing, phosphorylation at Ser-155 by AMPK in response to glucose deprivation inactivates WDR24 by promoting interaction with 14-3-3 proteins, such as YWHAG, preventing assembly of the GATOR2 complex. Post-translationally, autoubiquitinated; MIOS is required to prevent autoubiquitination.

The protein localises to the lysosome membrane. It carries out the reaction S-ubiquitinyl-[E2 ubiquitin-conjugating enzyme]-L-cysteine + [acceptor protein]-L-lysine = [E2 ubiquitin-conjugating enzyme]-L-cysteine + N(6)-ubiquitinyl-[acceptor protein]-L-lysine.. It functions in the pathway protein modification; protein ubiquitination. With respect to regulation, the GATOR2 complex is negatively regulated by the upstream amino acid sensors CASTOR1 and SESN2, which sequester the GATOR2 complex in absence of amino acids. In the presence of abundant amino acids, GATOR2 is released from CASTOR1 and SESN2 and activated. Functionally, catalytic component of the GATOR2 complex, a multiprotein complex that acts as an activator of the amino acid-sensing branch of the mTORC1 signaling pathway. The GATOR2 complex indirectly activates mTORC1 through the inhibition of the GATOR1 subcomplex. GATOR2 probably acts as an E3 ubiquitin-protein ligase toward GATOR1. In the presence of abundant amino acids, the GATOR2 complex mediates ubiquitination of the NPRL2 core component of the GATOR1 complex, leading to GATOR1 inactivation. In the absence of amino acids, GATOR2 is inhibited, activating the GATOR1 complex. In addition to its role in regulation of the mTORC1 complex, promotes the acidification of lysosomes and facilitates autophagic flux. Within the GATOR2 complex, WDR24 constitutes the catalytic subunit that mediates 'Lys-6'-linked ubiquitination of NPRL2. In Homo sapiens (Human), this protein is GATOR2 complex protein WDR24.